Here is a 352-residue protein sequence, read N- to C-terminus: Ion-translocating oxidoreductase complex subunit D (352 aa).

4 helical membrane-spanning segments follow: residues isoleucine 20–glycine 40, glycine 42–leucine 62, valine 69–proline 91, and proline 123–leucine 143. Threonine 187 is subject to FMN phosphoryl threonine. 5 helical membrane-spanning segments follow: residues leucine 215–leucine 235, tryptophan 242–phenylalanine 262, leucine 267–leucine 287, leucine 301–proline 321, and aspartate 322–threonine 342.

Belongs to the NqrB/RnfD family. In terms of assembly, the complex is composed of six subunits: RsxA, RsxB, RsxC, RsxD, RsxE and RsxG. The cofactor is FMN.

The protein localises to the cell inner membrane. In terms of biological role, part of a membrane-bound complex that couples electron transfer with translocation of ions across the membrane. Required to maintain the reduced state of SoxR. This is Ion-translocating oxidoreductase complex subunit D from Salmonella paratyphi A (strain ATCC 9150 / SARB42).